The primary structure comprises 145 residues: Large ribosomal subunit protein bL19 (145 aa).

Residues 112 to 130 (GKSARIKERRPAKAVEKTS) show a composition bias toward basic and acidic residues. A disordered region spans residues 112 to 145 (GKSARIKERRPAKAVEKTSKPASAKKPAAKANKK).

Belongs to the bacterial ribosomal protein bL19 family.

Its function is as follows. This protein is located at the 30S-50S ribosomal subunit interface and may play a role in the structure and function of the aminoacyl-tRNA binding site. This chain is Large ribosomal subunit protein bL19, found in Malacoplasma penetrans (strain HF-2) (Mycoplasma penetrans).